The sequence spans 448 residues: Chromogranin-A (448 aa).

The first 18 residues, methionine 1 to alanine 18, serve as a signal peptide directing secretion. The cysteines at positions 35 and 56 are disulfide-linked. Residues leucine 116 to tyrosine 251 form a disordered region. Composition is skewed to basic and acidic residues over residues alanine 129–glutamate 139 and glutamine 158–isoleucine 175. Serine 197 is subject to Phosphoserine. Over residues valine 205–glutamate 222 the composition is skewed to basic and acidic residues. The segment covering glutamate 223–glycine 238 has biased composition (acidic residues). Residues serine 258 and serine 288 each carry the phosphoserine modification. The interval leucine 263–serine 429 is disordered. Glycine 308 is subject to Glycine amide. The span at lysine 310–glutamate 350 shows a compositional bias: basic and acidic residues. Residues serine 311, serine 324, and serine 362 each carry the phosphoserine modification. A Methionine sulfoxide modification is found at methionine 363. Phosphoserine occurs at positions 389, 393, 415, and 429. Over residues tyrosine 405–aspartate 422 the composition is skewed to basic and acidic residues. O-linked (Xyl...) (chondroitin sulfate) serine glycosylation is present at serine 415.

Belongs to the chromogranin/secretogranin protein family. Self-interacts; self-assembly is promoted in vitro by chondroitin sulfate attachment which occurs at mildly acidic pH conditions. Interacts with SCG3. Interacts with ITPR1 in the secretory granules. Post-translationally, O-glycosylated; contains chondroitin sulfate (CS). CS attachment is pH-dependent, being observed at mildly acidic conditions of pH 5 but not at neutral pH, and promotes self-assembly in vitro. Highly expressed in adrenal medulla and pituitary gland. Weaker expression detected in cerebrum, cerebellum, spinal cord, liver, thyroid gland, striated muscle, lung, spleen, kidney, parotid gland, and sublingual gland.

It is found in the secreted. The protein localises to the cytoplasmic vesicle. Its subcellular location is the secretory vesicle. It localises to the neuronal dense core vesicle. Functionally, strongly inhibits glucose induced insulin release from the pancreas. Its function is as follows. Inhibits catecholamine release from chromaffin cells and noradrenergic neurons by acting as a non-competitive nicotinic cholinergic antagonist. Can induce mast cell migration, degranulation and production of cytokines and chemokines. In terms of biological role, regulates granule biogenesis in endocrine cells by up-regulating the transcription of protease nexin 1 (SERPINE2) via a cAMP-PKA-SP1 pathway. This leads to inhibition of granule protein degradation in the Golgi complex which in turn promotes granule formation. This is Chromogranin-A (CHGA) from Equus caballus (Horse).